Consider the following 738-residue polypeptide: 1,4-alpha-glucan branching enzyme GlgB (738 aa).

The active-site Nucleophile is the Asp-417. The active-site Proton donor is Glu-472.

The protein belongs to the glycosyl hydrolase 13 family. GlgB subfamily. In terms of assembly, monomer.

It catalyses the reaction Transfers a segment of a (1-&gt;4)-alpha-D-glucan chain to a primary hydroxy group in a similar glucan chain.. It functions in the pathway glycan biosynthesis; glycogen biosynthesis. Its function is as follows. Catalyzes the formation of the alpha-1,6-glucosidic linkages in glycogen by scission of a 1,4-alpha-linked oligosaccharide from growing alpha-1,4-glucan chains and the subsequent attachment of the oligosaccharide to the alpha-1,6 position. The chain is 1,4-alpha-glucan branching enzyme GlgB from Burkholderia pseudomallei (strain K96243).